Consider the following 169-residue polypeptide: CRISPR system Cmr subunit Cmr5 (169 aa).

It belongs to the CRISPR system Cmr5 family. In terms of assembly, monomer in isolation. Part of the type III-B Cmr ribonucleoprotein (RNP) complex, an elongated RNP with Cmr2 and Cmr3 as the base, with Cmr4 and Cmr5 forming a helical core along the mature crRNA (39 or 45 nt in length), while the complex is capped by Cmr6 and Cmr1. The 5' end of the crRNA is bound to Cmr2 and Cmr3, while Cmr6 and a Cmr1 subunit (Cmr1-1 or Cmr1-2) cap the 3' end of the crRNA. The target RNA lies antiparallel to the crRNA, with its 5' end near Cmr1 and Cmr6 and its 3' end near Cmr2 and Cmr3; major target cleavage occurs nears the junction of Cmr1/Cmr6 and Cmr4/Cmr, with minor cleavage occurring at 6 nt intervals which coincide with the proposed spacing of Cmr4 subunits. Interacts with Cmr4. Interacts with Cmr2, Cmr4 and Cmr6.

The protein resides in the cytoplasm. CRISPR (clustered regularly interspaced short palindromic repeat), is an adaptive immune system that provides protection against mobile genetic elements (viruses, transposable elements and conjugative plasmids). CRISPR clusters contain sequences complementary to antecedent mobile elements and target invading nucleic acids. CRISPR clusters are transcribed and processed into CRISPR RNA (crRNA), formerly called psiRNA (prokaryotic silencing) in this organism. Part of the Cmr ribonucleoprotein complex which has divalent cation-dependent endoribonuclease activity specific for ssRNA complementary to the crRNA (target NRA), generating 5' hydroxy- and 3' phosphate or 2'-3' cyclic phosphate termini. Cmr4 is probably the subunit that cleaves target RNA. Cmr complex does not cleave ssDNA complementary to the crRNA. Cleavage of invading RNA is guided by the crRNA; substrate cleavage occurs a fixed distance (14 nt) from the 3' end of the crRNA. In vitro reconstitution shows Cmr1-2 and Cmr5 are not absolutely necessary for target cleavage. In Pyrococcus furiosus (strain ATCC 43587 / DSM 3638 / JCM 8422 / Vc1), this protein is CRISPR system Cmr subunit Cmr5.